The following is a 492-amino-acid chain: T-box transcription factor TBX5-A (492 aa).

The tract at residues 1 to 43 is disordered; sequence MADSEDTFRLQNSPSDSEPKDLQNEGKSDKQNAAVSKSPSSQT. Over residues 17-30 the composition is skewed to basic and acidic residues; the sequence is SEPKDLQNEGKSDK. Residues 31–43 are compositionally biased toward polar residues; it reads QNAAVSKSPSSQT. Positions 62 to 237 form a DNA-binding region, T-box; that stretch reads LWTKFHEVGT…NNPFAKGFRG (176 aa). Residues 331 to 352 form a disordered region; it reads AGEHPYKKPYVESSSSEDDHYY.

As to quaternary structure, monomer. Homodimer (via the T-box); binds DNA as homodimer. As to expression, expressed in the dorsal optic cup of developing eye, pectoral fin buds and heart. At 31 hpf, when the pectoral fin buds have begun bulging outwards, restricted expression is detected throughout the mesenchyme of the early fin buds and these high levels of expression continue until later stages.

The protein localises to the nucleus. It is found in the cytoplasm. In terms of biological role, required for pectoral fin formation. Together with tbx5b, involved in eye and heart development. Required for the looping stage of heart development. May bind to the core DNA motif of promoters. The polypeptide is T-box transcription factor TBX5-A (tbx5a) (Danio rerio (Zebrafish)).